We begin with the raw amino-acid sequence, 84 residues long: U4-theraphotoxin-Hhn1a (84 aa).

Residues 1–22 (MKVTLIAIPTCAAVLVLHTTAA) form the signal peptide. Residues 23 to 47 (EELEESQLMEVGMPDTELAAVDEER) constitute a propeptide that is removed on maturation. 3 disulfides stabilise this stretch: cysteine 51–cysteine 65, cysteine 55–cysteine 76, and cysteine 70–cysteine 81.

Belongs to the neurotoxin 12 (Hwtx-2) family. 02 (Hwtx-2) subfamily. As to expression, expressed by the venom gland.

It is found in the secreted. Its function is as follows. Postsynaptic neurotoxin. This Cyriopagopus hainanus (Chinese bird spider) protein is U4-theraphotoxin-Hhn1a.